The following is a 376-amino-acid chain: Cinnamyl alcohol dehydrogenase 2 (376 aa).

Zn(2+) is bound at residue cysteine 44. Position 46 (serine 46) interacts with NADP(+). Histidine 66, glutamate 67, cysteine 97, cysteine 100, cysteine 103, cysteine 111, and cysteine 161 together coordinate Zn(2+). NADP(+) contacts are provided by residues threonine 165, glycine 187–glycine 192, serine 210–lysine 215, threonine 250, glycine 274, and serine 297–isoleucine 299.

Belongs to the zinc-containing alcohol dehydrogenase family. In terms of assembly, homodimer. It depends on Zn(2+) as a cofactor. As to expression, expressed at the base of the stems.

The catalysed reaction is (E)-cinnamyl alcohol + NADP(+) = (E)-cinnamaldehyde + NADPH + H(+). It catalyses the reaction (E)-coniferol + NADP(+) = (E)-coniferaldehyde + NADPH + H(+). It carries out the reaction (E)-sinapyl alcohol + NADP(+) = (E)-sinapaldehyde + NADPH + H(+). The enzyme catalyses (E)-4-coumaroyl alcohol + NADP(+) = (E)-4-coumaraldehyde + NADPH + H(+). The catalysed reaction is (E)-caffeyl alcohol + NADP(+) = (E)-caffeyl aldehyde + NADPH + H(+). Its pathway is aromatic compound metabolism; phenylpropanoid biosynthesis. Involved in lignin biosynthesis. Catalyzes the final step specific for the production of lignin monomers. Catalyzes the NADPH-dependent reduction of coniferaldehyde, 5-hydroxyconiferaldehyde, sinapaldehyde, 4-coumaraldehyde and caffeyl aldehyde to their respective alcohols. This chain is Cinnamyl alcohol dehydrogenase 2, found in Arabidopsis thaliana (Mouse-ear cress).